We begin with the raw amino-acid sequence, 139 residues long: Large ribosomal subunit protein uL22 (139 aa).

Positions 118–139 (VEVESRPKKVASKSKSQKGSAR) are disordered. A compositionally biased stretch (basic residues) spans 125-139 (KKVASKSKSQKGSAR).

It belongs to the universal ribosomal protein uL22 family. Part of the 50S ribosomal subunit.

This protein binds specifically to 23S rRNA; its binding is stimulated by other ribosomal proteins, e.g. L4, L17, and L20. It is important during the early stages of 50S assembly. It makes multiple contacts with different domains of the 23S rRNA in the assembled 50S subunit and ribosome. Its function is as follows. The globular domain of the protein is located near the polypeptide exit tunnel on the outside of the subunit, while an extended beta-hairpin is found that lines the wall of the exit tunnel in the center of the 70S ribosome. This is Large ribosomal subunit protein uL22 from Saccharopolyspora erythraea (strain ATCC 11635 / DSM 40517 / JCM 4748 / NBRC 13426 / NCIMB 8594 / NRRL 2338).